Reading from the N-terminus, the 337-residue chain is Ribosomal RNA small subunit methyltransferase C (337 aa).

The protein belongs to the methyltransferase superfamily. RsmC family. Monomer.

It is found in the cytoplasm. The enzyme catalyses guanosine(1207) in 16S rRNA + S-adenosyl-L-methionine = N(2)-methylguanosine(1207) in 16S rRNA + S-adenosyl-L-homocysteine + H(+). In terms of biological role, specifically methylates the guanine in position 1207 of 16S rRNA in the 30S particle. This Acinetobacter baumannii (strain AB307-0294) protein is Ribosomal RNA small subunit methyltransferase C.